A 456-amino-acid chain; its full sequence is UDP-N-acetylmuramoylalanine--D-glutamate ligase (456 aa).

G119–T125 contributes to the ATP binding site.

The protein belongs to the MurCDEF family.

The protein resides in the cytoplasm. The enzyme catalyses UDP-N-acetyl-alpha-D-muramoyl-L-alanine + D-glutamate + ATP = UDP-N-acetyl-alpha-D-muramoyl-L-alanyl-D-glutamate + ADP + phosphate + H(+). It participates in cell wall biogenesis; peptidoglycan biosynthesis. Its function is as follows. Cell wall formation. Catalyzes the addition of glutamate to the nucleotide precursor UDP-N-acetylmuramoyl-L-alanine (UMA). This is UDP-N-acetylmuramoylalanine--D-glutamate ligase (murD) from Enterococcus faecalis (strain ATCC 700802 / V583).